Consider the following 181-residue polypeptide: Adenylate kinase (181 aa).

10–15 (GAGKGT) is a binding site for ATP. Residues 30-59 (STGELFRRNIEEGTKLGVEAKRYLDAGDLV) are NMP. Residues threonine 31, arginine 36, 57–59 (DLV), 85–88 (GYPR), and glutamine 92 contribute to the AMP site. Positions 126 to 132 (GRGRADD) are LID. Residue arginine 127 participates in ATP binding. Positions 129 and 140 each coordinate AMP. Glycine 166 provides a ligand contact to ATP.

Belongs to the adenylate kinase family. As to quaternary structure, monomer.

Its subcellular location is the cytoplasm. The enzyme catalyses AMP + ATP = 2 ADP. The protein operates within purine metabolism; AMP biosynthesis via salvage pathway; AMP from ADP: step 1/1. In terms of biological role, catalyzes the reversible transfer of the terminal phosphate group between ATP and AMP. Plays an important role in cellular energy homeostasis and in adenine nucleotide metabolism. The sequence is that of Adenylate kinase from Mycobacterium tuberculosis (strain ATCC 25177 / H37Ra).